We begin with the raw amino-acid sequence, 154 residues long: DNA gyrase inhibitor (154 aa).

This sequence belongs to the DNA gyrase inhibitor family. As to quaternary structure, interacts with DNA gyrase.

The protein localises to the cytoplasm. Functionally, inhibits the supercoiling activity of DNA gyrase. Acts by inhibiting DNA gyrase at an early step, prior to (or at the step of) binding of DNA by the gyrase. It protects cells against toxins that target DNA gyrase, by inhibiting activity of these toxins and reducing the formation of lethal double-strand breaks in the cell. This chain is DNA gyrase inhibitor, found in Pectobacterium carotovorum subsp. carotovorum (strain PC1).